Reading from the N-terminus, the 162-residue chain is Shikimate kinase (162 aa).

10–15 (GAGKST) contacts ATP. Serine 14 is a binding site for Mg(2+). Aspartate 28, arginine 52, and glycine 73 together coordinate substrate. Arginine 113 is an ATP binding site. Arginine 129 contributes to the substrate binding site.

It belongs to the shikimate kinase family. In terms of assembly, monomer. Mg(2+) serves as cofactor.

The protein localises to the cytoplasm. The catalysed reaction is shikimate + ATP = 3-phosphoshikimate + ADP + H(+). It functions in the pathway metabolic intermediate biosynthesis; chorismate biosynthesis; chorismate from D-erythrose 4-phosphate and phosphoenolpyruvate: step 5/7. Catalyzes the specific phosphorylation of the 3-hydroxyl group of shikimic acid using ATP as a cosubstrate. The polypeptide is Shikimate kinase (Lactococcus lactis subsp. cremoris (strain SK11)).